We begin with the raw amino-acid sequence, 349 residues long: Sphingomyelinase D (349 aa).

An N-terminal signal peptide occupies residues 1–18; that stretch reads MLLSSLISLALLSSQVVA. Residue H52 is part of the active site. E72, D74, and D123 together coordinate Mg(2+). An SMD-tail motif is present at residues 310-317; that stretch reads ATNDNNPW.

Belongs to the sphingomyelinase D/phospholipase D family. Mg(2+) is required as a cofactor.

The protein localises to the secreted. The catalysed reaction is a sphingomyelin + H2O = an N-acylsphing-4-enine 1-phosphate + choline + H(+). Functionally, catalyzes the hydrolysis of sphingomyelin. Sphingomyelinases D are produced by some spider in their venoms, but also by arthropods such as ticks, or pathogenic bacteria and fungi. They might play a role in pathogenicity through different mechanisms, such as membrane destabilization and host cell penetration, but also pulmonary inflammation and cutaneous lesions. This is Sphingomyelinase D from Uncinocarpus reesii (strain UAMH 1704).